We begin with the raw amino-acid sequence, 142 residues long: Holo-[acyl-carrier-protein] synthase (142 aa).

Mg(2+) is bound by residues Asp-8 and Glu-57.

This sequence belongs to the P-Pant transferase superfamily. AcpS family. Requires Mg(2+) as cofactor.

The protein resides in the cytoplasm. It carries out the reaction apo-[ACP] + CoA = holo-[ACP] + adenosine 3',5'-bisphosphate + H(+). In terms of biological role, transfers the 4'-phosphopantetheine moiety from coenzyme A to a Ser of acyl-carrier-protein. This chain is Holo-[acyl-carrier-protein] synthase, found in Ruegeria sp. (strain TM1040) (Silicibacter sp.).